Here is a 308-residue protein sequence, read N- to C-terminus: NADH-cytochrome b5 reductase 1 (308 aa).

A helical membrane pass occupies residues 10–27 (INGVYIPSALLIFGTTII). Residues 59–164 (TEFQNFVLKD…RGPKGAMVYT (106 aa)) enclose the FAD-binding FR-type domain. FAD is bound by residues 144–159 (TTLR…GPKG) and 170–207 (HIGM…QIDL).

This sequence belongs to the flavoprotein pyridine nucleotide cytochrome reductase family. In terms of assembly, monomer. Component of the 2-(3-amino-3-carboxypropyl)histidine synthase complex composed of DPH1, DPH2, DPH3 and a NADH-dependent reductase, predominantly CBR1. The cofactor is FAD.

The protein localises to the mitochondrion outer membrane. It carries out the reaction 2 Fe(III)-[cytochrome b5] + NADH = 2 Fe(II)-[cytochrome b5] + NAD(+) + H(+). The enzyme catalyses 2 Fe(3+)-[Dph3] + NADH = 2 Fe(2+)-[Dph3] + NAD(+) + H(+). It participates in protein modification; peptidyl-diphthamide biosynthesis. NADH-dependent reductase for DPH3 and cytochrome b5. Required for the first step of diphthamide biosynthesis, a post-translational modification of histidine which occurs in elongation factor 2. DPH1 and DPH2 transfer a 3-amino-3-carboxypropyl (ACP) group from S-adenosyl-L-methionine (SAM) to a histidine residue, the reaction is assisted by a reduction system comprising DPH3 and a NADH-dependent reductase, predominantly CBR1. By reducing DPH3, also involved in the formation of the tRNA wobble base modification mcm5s 2U (5-methoxycarbonylmethyl-2-thiouridine), mediated by the elongator complex. The cytochrome b5/NADH cytochrome b5 reductase electron transfer system supports the catalytic activity of several sterol biosynthetic enzymes. The polypeptide is NADH-cytochrome b5 reductase 1 (CBR1) (Coccidioides immitis (strain RS) (Valley fever fungus)).